A 184-amino-acid polypeptide reads, in one-letter code: Peptidoglycan-recognition protein SC2 (184 aa).

Positions Met1–Gly20 are cleaved as a signal peptide. Residues Ser45–Gly169 enclose the N-acetylmuramoyl-L-alanine amidase domain. His50 provides a ligand contact to Zn(2+). Cys57 and Cys63 are disulfide-bonded. Zn(2+) is bound by residues His159 and Cys167.

Belongs to the N-acetylmuramoyl-L-alanine amidase 2 family. Requires Zn(2+) as cofactor.

It localises to the secreted. It catalyses the reaction Hydrolyzes the link between N-acetylmuramoyl residues and L-amino acid residues in certain cell-wall glycopeptides.. N-acetylmuramyl-L-alanine amidase involved in innate immunity by degrading bacterial peptidoglycans (PGN). Probably plays a scavenger role by digesting biologically active PGN into biologically inactive fragments. Has no direct bacteriolytic activity. The chain is Peptidoglycan-recognition protein SC2 (PGRP-SC2) from Drosophila simulans (Fruit fly).